The sequence spans 67 residues: ATP synthase protein 8 (67 aa).

A helical transmembrane segment spans residues T8–F24. The residue at position 54 (K54) is an N6-acetyllysine; alternate. K54 carries the N6-succinyllysine; alternate modification. Residue K57 is modified to N6-acetyllysine.

The protein belongs to the ATPase protein 8 family. In terms of assembly, F-type ATPases have 2 components, CF(1) - the catalytic core - and CF(0) - the membrane proton channel. Component of an ATP synthase complex composed of ATP5PB, ATP5MC1, ATP5F1E, ATP5PD, ATP5ME, ATP5PF, ATP5MF, MT-ATP6, MT-ATP8, ATP5F1A, ATP5F1B, ATP5F1D, ATP5F1C, ATP5PO, ATP5MG, ATP5MK and ATP5MJ. Interacts with PRICKLE3.

The protein resides in the mitochondrion membrane. Mitochondrial membrane ATP synthase (F(1)F(0) ATP synthase or Complex V) produces ATP from ADP in the presence of a proton gradient across the membrane which is generated by electron transport complexes of the respiratory chain. F-type ATPases consist of two structural domains, F(1) - containing the extramembraneous catalytic core and F(0) - containing the membrane proton channel, linked together by a central stalk and a peripheral stalk. During catalysis, ATP synthesis in the catalytic domain of F(1) is coupled via a rotary mechanism of the central stalk subunits to proton translocation. Part of the complex F(0) domain. Minor subunit located with subunit a in the membrane. The polypeptide is ATP synthase protein 8 (MT-ATP8) (Felis silvestris lybica (African wildcat)).